Here is a 490-residue protein sequence, read N- to C-terminus: GTPase Der (490 aa).

2 EngA-type G domains span residues 3–166 (PVVA…VDEI) and 203–376 (IKLA…DSST). GTP is bound by residues 9 to 16 (GRPNVGKS), 56 to 60 (DTGGI), 118 to 121 (NKTD), 209 to 216 (GRPNVGKS), 256 to 260 (DTAGV), and 321 to 324 (NKWD). Positions 377–461 (RRQSTAMLTR…PIRIQFKEGE (85 aa)) constitute a KH-like domain.

The protein belongs to the TRAFAC class TrmE-Era-EngA-EngB-Septin-like GTPase superfamily. EngA (Der) GTPase family. In terms of assembly, associates with the 50S ribosomal subunit.

Its function is as follows. GTPase that plays an essential role in the late steps of ribosome biogenesis. This is GTPase Der from Enterobacter sp. (strain 638).